We begin with the raw amino-acid sequence, 1358 residues long: Indole-3-acetaldehyde oxidase (1358 aa).

Positions 11-98 (STVVLAVNGK…RCSVTTSEGI (88 aa)) constitute a 2Fe-2S ferredoxin-type domain. Residues Cys-50, Cys-55, and Cys-58 each contribute to the [2Fe-2S] cluster site. One can recognise an FAD-binding PCMH-type domain in the interval 241–419 (IAASGDGWYH…LSIFIPEWGS (179 aa)). The tract at residues 532–559 (SSAPSNIDTPNGSYTHETGSNVDSPERH) is disordered. Polar residues predominate over residues 537–554 (NIDTPNGSYTHETGSNVD).

Belongs to the xanthine dehydrogenase family. Aldehyde oxidases (AO) are homodimers and heterodimers of AO subunits. The cofactor is [2Fe-2S] cluster. FAD is required as a cofactor. It depends on Mo-molybdopterin as a cofactor. As to expression, mostly expressed in roots, and, to a lower extent, in mesocotyl, leaves and coleoptile. Accumulates in apical region of maize coleoptiles (at protein level).

The protein localises to the cytoplasm. The catalysed reaction is indole-3-acetaldehyde + O2 + H2O = (indol-3-yl)acetate + H2O2 + H(+). Inhibited by 2-mercaptoethanol, p-chloromercuribenzoate, and iodoacetate. Its function is as follows. In higher plants aldehyde oxidases (AO) appear to be homo- and heterodimeric assemblies of AO subunits with probably different physiological functions. Involved in the biosynthesis of auxin from (indol-3-yl)acetaldehyde. Can also use indole-3-aldehyde and benzaldehyde as substrate. The polypeptide is Indole-3-acetaldehyde oxidase (AO1) (Zea mays (Maize)).